The following is a 400-amino-acid chain: Probable vacuolar protease A (400 aa).

The signal sequence occupies residues 1 to 18 (MKGSLLLAGATLLGCTSA). Positions 19-72 (KLHSLKLKKVSLKEQLEHADIDVQIKSLGQKYMGIRPEQHEQQMFKEQTPIEVE) are cleaved as a propeptide — activation peptide. The region spanning 87 to 397 (YFSEISIGTP…DLGKGTVGLA (311 aa)) is the Peptidase A1 domain. Aspartate 105 is a catalytic residue. A disulfide bond links cysteine 118 and cysteine 123. N-linked (GlcNAc...) asparagine glycosylation is present at asparagine 140. Residue aspartate 289 is part of the active site. A disulfide bridge links cysteine 323 with cysteine 356. A glycan (N-linked (GlcNAc...) asparagine) is linked at asparagine 340.

It belongs to the peptidase A1 family.

It localises to the vacuole lumen. The protein localises to the secreted. It carries out the reaction Hydrolysis of proteins with broad specificity for peptide bonds. Cleaves -Leu-Leu-|-Val-Tyr- bond in a synthetic substrate. Does not act on esters of Tyr or Arg.. Functionally, vacuolar aspartic endopeptidase which is probably also secreted and contributes to virulence. The protein is Probable vacuolar protease A (PEP2) of Arthroderma benhamiae (strain ATCC MYA-4681 / CBS 112371) (Trichophyton mentagrophytes).